The primary structure comprises 25 residues: Caerin-1.2 (25 aa).

At Leu-25 the chain carries Leucine amide.

In terms of tissue distribution, expressed by the skin parotoid and/or rostral glands.

Its subcellular location is the secreted. Functionally, antibacterial peptide, that adopts an alpha helical conformation which can disrupt bacterial membranes. Each caerin displays a different antimicrobial specificity. This chain is Caerin-1.2, found in Ranoidea caerulea (Green tree frog).